Reading from the N-terminus, the 607-residue chain is CRISPR-associated DNA-binding protein Cas12m (607 aa).

The segment at 1 to 16 is wedge domain (WED-N); that stretch reads MTRVTVQTAGVHYKWQ. The segment at 17–189 is recognition domain (REC); it reads MPDQLTQQLR…QLRHHRWDGT (173 aa). The tract at residues 50 to 124 is roof in REC; that stretch reads WSSYPAVAAL…IASVRDEATE (75 aa). The segment covering 74–83 has biased composition (basic and acidic residues); that stretch reads ASTVKEEKSR. Positions 74-94 are disordered; sequence ASTVKEEKSRQRTKRPSHPAV. Positions 190-315 are wedge domain (WED-C); that stretch reads GTISVQLQRQ…KIPDQGEVDE (126 aa). Residues 316 to 559 form a ruvC-I region; sequence GPTIAVHLGW…TVSHTGLSRV (244 aa). The ruvC insertion stretch occupies residues 391 to 452; the sequence is SIRDTLVAWL…EGADIAETLE (62 aa). The segment at 552-588 is target nucleic-acid binding (TNB); that stretch reads SHTGLSRVHAACGHENPADDRYLMQPVLCDGCGRTYD. 4 residues coordinate Zn(2+): His560, Cys563, Cys580, and Cys583. A ruvC-II region spans residues 589–607; that stretch reads TDLSATILMLQRASAATSN. A Mg(2+)-binding site is contributed by Asp590.

Belongs to the CRISPR-associated DNA-binding protein Cas12m family. In terms of assembly, binds crRNA and target dsDNA as a monomer. Requires Mg(2+) as cofactor. It depends on Zn(2+) as a cofactor.

In terms of biological role, CRISPR (clustered regularly interspaced short palindromic repeat), is an adaptive immune system that provides protection against mobile genetic elements (viruses, transposable elements and conjugative plasmids). CRISPR clusters contain sequences complementary to antecedent mobile elements and target invading nucleic acids. CRISPR clusters are transcribed and processed into CRISPR RNA (crRNA). Recognizes a short motif in the CRISPR repeat sequences (the 5' PAM or protospacer adjacent motif, 5'-TTN-3' in this organism) to help distinguish self versus nonself, as targets within the bacterial CRISPR locus do not have PAMs. Upon expression in E.coli as a CRISPR locus inhibits plasmid propagation when targeted to regions essential for plasmid propagation (replication origin and a selectable marker); inhibits expression of a non-selectable marker, probably at the transcriptional level. Protects E.coli against bacteriophage M13mp18, to a lesser extent against lambda and VpaE1 as well as phage T4 with hydroxymethyl or unmodified (but not glycosylated) cytosines. Preferentially binds to its associated crRNA. Cas12m-crRNA binds DNA in a PAM-dependent, crRNA-guided fashion. Binds a 20-bp crRNA-ss-target DNA heteroduplex, in a 52 nucleotide crRNA. No dsDNA, ssDNA or RNA nuclease activity is seen for the crRNA-Cas12m complex. Probably required for pre-crRNA processing to mature crRNA. The polypeptide is CRISPR-associated DNA-binding protein Cas12m (Gordonia otitidis (strain DSM 44809 / CCUG 52243 / JCM 12355 / NBRC 100426 / IFM 10032)).